The sequence spans 99 residues: Small ribosomal subunit protein bS20 (99 aa).

This sequence belongs to the bacterial ribosomal protein bS20 family.

In terms of biological role, binds directly to 16S ribosomal RNA. In Prochlorococcus marinus (strain SARG / CCMP1375 / SS120), this protein is Small ribosomal subunit protein bS20.